The chain runs to 353 residues: Probable G-protein coupled receptor 139 (353 aa).

The Extracellular portion of the chain corresponds to 1–29 (MEHTHAHLAANSSLSWWSPGSACGLGFVP). An N-linked (GlcNAc...) asparagine glycan is attached at Asn11. A helical membrane pass occupies residues 30–50 (VVYYSLLLCLGLPANILTVII). Residues 51–65 (LSQLVARRQKSSYNY) are Cytoplasmic-facing. The helical transmembrane segment at 66–86 (LLALAAADILVLFFIVFVDFL) threads the bilayer. Residues 87-102 (LEDFILNMQMPQVPDK) are Extracellular-facing. The chain crosses the membrane as a helical span at residues 103-123 (IIEVLEFSSIHTSIWITVPLT). Over 124–148 (IDRYIAVCHPLKYHTVSYPARTRKV) the chain is Cytoplasmic. Residues 149-169 (IVSVYITCFLTSIPYYWWPNI) traverse the membrane as a helical segment. The Extracellular portion of the chain corresponds to 170–181 (WTEDYISTSVHH). A helical membrane pass occupies residues 182-202 (VLIWIHCFTVYLVPCSIFFIL). Residues 203 to 228 (NSIIVYKLRRKSNFRLRGYSTGKTTA) are Cytoplasmic-facing. The chain crosses the membrane as a helical span at residues 229 to 249 (ILFTITSIFATLWAPRIIMIL). The Extracellular segment spans residues 250 to 268 (YHLYGAPIQNRWLVHIMSD). Residues 269–289 (IANMLALLNTAINFFLYCFIS) traverse the membrane as a helical segment. At 290 to 353 (KRFRTMAAAT…KNGKPIKVSP (64 aa)) the chain is on the cytoplasmic side.

Belongs to the G-protein coupled receptor 1 family. As to expression, expressed almost exclusively in the brain. Detected at very low levels in the peripheral tissues.

It is found in the cell membrane. Its function is as follows. Orphan receptor. Seems to act through a G(q/11)-mediated pathway. This chain is Probable G-protein coupled receptor 139 (GPR139), found in Homo sapiens (Human).